A 254-amino-acid polypeptide reads, in one-letter code: Putative epimerase LsrE (254 aa).

A helical membrane pass occupies residues 14–34 (VALLASYPLSVGILAGQWIAL). A divalent metal cation contacts are provided by histidine 50, aspartate 52, and histidine 81. Aspartate 52 serves as the catalytic Proton acceptor. Substrate-binding positions include histidine 81, 166 to 169 (GYGS), 199 to 201 (DGS), and 221 to 222 (GS). Aspartate 199 is an a divalent metal cation binding site. Aspartate 199 acts as the Proton donor in catalysis.

This sequence belongs to the ribulose-phosphate 3-epimerase family. A divalent metal cation serves as cofactor.

It localises to the cell membrane. The polypeptide is Putative epimerase LsrE (lsrE) (Salmonella paratyphi A (strain ATCC 9150 / SARB42)).